Reading from the N-terminus, the 552-residue chain is Harmonin (552 aa).

The segment at 1-86 (MDRKVAREFR…LTPRRSRKLK (86 aa)) is N-terminal domain. PDZ domains lie at 87 to 169 (EVRL…HIGL) and 211 to 293 (KVFI…AAAG). A mediates interaction with MYO7B region spans residues 194–552 (GVRGSLGSPG…KEYDDELTFF (359 aa)). Position 219 is a phosphoserine (serine 219). The stretch at 310–377 (RELQRQELLM…EKFKKQWEED (68 aa)) forms a coiled coil. The disordered stretch occupies residues 401–427 (KPKYDQGVEPELEPADDLDGGTEEQGE). The span at 408–427 (VEPELEPADDLDGGTEEQGE) shows a compositional bias: acidic residues. Residues 452 to 537 (DVRLLRIKKE…QGGDWIDLVV (86 aa)) enclose the PDZ 3 domain.

In terms of assembly, part of the IMAC/intermicrovillar adhesion complex/intermicrovillar tip-link complex composed of ANKS4B, MYO7B, USH1C, CDHR2 and CDHR5. Part of a complex composed of USH1C, USH1G and MYO7A. Interacts with F-actin. Interacts with USH2A. Interacts with SLC4A7. Interacts (via PDZ1 domain) with the C-terminus of USHBP1. Interacts (via N-terminus and PDZ 2 domain) with CDH23. Interacts with USH1G. Interacts with MYO7B. Interacts with CDHR2 and CDHR5; may mediate their interaction with MYO7B at the microvilli tip. Interacts (via PDZ 1 domain) with ANKS4B. Interacts (via PDZ 1 domain) with DOCK4. As to expression, expressed in small intestine, colon, kidney, eye and weakly in pancreas. Expressed also in vestibule of the inner ear.

The protein localises to the cytoplasm. The protein resides in the cytosol. It is found in the cytoskeleton. It localises to the cell projection. Its subcellular location is the microvillus. In terms of biological role, anchoring/scaffolding protein that is a part of the functional network formed by USH1C, USH1G, CDH23 and MYO7A that mediates mechanotransduction in cochlear hair cells. Required for normal development and maintenance of cochlear hair cell bundles. As part of the intermicrovillar adhesion complex/IMAC plays a role in brush border differentiation, controlling microvilli organization and length. Probably plays a central regulatory role in the assembly of the complex, recruiting CDHR2, CDHR5 and MYO7B to the microvilli tips. The protein is Harmonin (USH1C) of Homo sapiens (Human).